The sequence spans 621 residues: MIEKLTFGLFKKEDARSFMRLMAYVRPYKIRIVAALIAIFGVAATESYLAAFIAPLINHGFSAPAAPPELSAAAGILSTLQNWREQFTYMVWGTENKIWTVPLFLIILVVIRGICRFTSTYLMTWVSVMTISKIRKDMFAKMLTLSSRYHQETPSGTVLMNMLNLTEQSVSNASDIFTVLTRDTMIVTGLTIVLLYLNWQLSLIVVLMFPLLSLLSRYYRDRLKHVISDSQKSIGTMNNVIAETHQGHRVVKLFNGQAQAANRFDAINRTIVRLSKKITQATAAHSPFSELIASIALAVVIFIALWQSQNGYTTIGEFMAFIVAMLQMYAPIKSLANISIPMQTMFLAADGVCAFLDTPPEQDKGTLAPQRVEGRISFRNVDVEYRSDGIKALDGFNLDIRQGERVALVGRSGSGKSTVVNLLPRFVEPSAGNICIDGIDIADIKLDCLRAQFALVSQDVFLFDDTLFENVRYSRPDAGEAEVLSALQAANLQSLIDASPLGLHQPIGSNGSNLSGGQRQRVAIARAILKDAPILLLDEATSALDNESERLVQQALERLMENRTGIIVAHRLTTIEGADRIIVMDDGKIIEQGTHEQLMSQNGYYTMLRNISNKDAAVRTA.

Transmembrane regions (helical) follow at residues 32–52 (IVAALIAIFGVAATESYLAAF), 91–111 (VWGTENKIWTVPLFLIILVVI), 192–212 (IVLLYLNWQLSLIVVLMFPLL), 286–306 (SPFSELIASIALAVVIFIALW), and 312–332 (YTTIGEFMAFIVAMLQMYAPI). The region spanning 33-344 (VAALIAIFGV…LANISIPMQT (312 aa)) is the ABC transmembrane type-1 domain. The ABC transporter domain occupies 378-611 (FRNVDVEYRS…NGYYTMLRNI (234 aa)). An ATP-binding site is contributed by 410–417 (GRSGSGKS).

Belongs to the ABC transporter superfamily. Lipid exporter (TC 3.A.1.106) family. As to quaternary structure, homodimer.

It localises to the cell inner membrane. It carries out the reaction ATP + H2O + lipid A-core oligosaccharideSide 1 = ADP + phosphate + lipid A-core oligosaccharideSide 2.. Its function is as follows. Involved in lipopolysaccharide (LPS) biosynthesis. Translocates lipid A-core from the inner to the outer leaflet of the inner membrane. Transmembrane domains (TMD) form a pore in the inner membrane and the ATP-binding domain (NBD) is responsible for energy generation. The sequence is that of ATP-dependent lipid A-core flippase from Neisseria meningitidis serogroup A / serotype 4A (strain DSM 15465 / Z2491).